We begin with the raw amino-acid sequence, 233 residues long: MEGGAYGAGKAGGAFDPYTLVRQPHTILRVVSWLFSIVVFGSIVNEGYLNSASEGEEFCIYNRNPNACSYGVAVGVLAFLTCLLYLALDVYFPQISSVKDRKKAVLSDIGVSAFWAFLWFVGFCYLANQWQVSKPKDNPLNEGTDAARAAIAFSFFSIFTWAGQAVLAFQRYQIGADSALFSQDYMDPSQDSSMPYAPYVEPTGPDPAGMGGTYQQPANTFDTEPQGYQSQGY.

M1 is modified (N-acetylmethionine). Over M1 to Q23 the chain is Cytoplasmic. Residues L20–Q173 enclose the MARVEL domain. Residues P24–V44 form a helical membrane-spanning segment. Over N45 to G71 the chain is Lumenal. The chain crosses the membrane as a helical span at residues V72–F92. The Cytoplasmic portion of the chain corresponds to P93–K103. Residues A104 to C124 form a helical membrane-spanning segment. At Y125–R148 the chain is on the lumenal side. The chain crosses the membrane as a helical span at residues A149–F169. Topologically, residues Q170–Y233 are cytoplasmic. A disordered region spans residues M194 to Y233. Over residues T213 to Y233 the composition is skewed to polar residues.

It belongs to the synaptogyrin family.

Its subcellular location is the cytoplasmic vesicle. It is found in the secretory vesicle. The protein localises to the synaptic vesicle membrane. The protein resides in the melanosome. In terms of biological role, may play a role in regulated exocytosis. Modulates the localization of synaptophysin/SYP into synaptic-like microvesicles and may therefore play a role in synaptic-like microvesicle formation and/or maturation. Involved in the regulation of short-term and long-term synaptic plasticity. This chain is Synaptogyrin-1, found in Homo sapiens (Human).